The primary structure comprises 125 residues: Large ribosomal subunit protein bL12 (125 aa).

It belongs to the bacterial ribosomal protein bL12 family. Homodimer. Part of the ribosomal stalk of the 50S ribosomal subunit. Forms a multimeric L10(L12)X complex, where L10 forms an elongated spine to which 2 to 4 L12 dimers bind in a sequential fashion. Binds GTP-bound translation factors.

Forms part of the ribosomal stalk which helps the ribosome interact with GTP-bound translation factors. Is thus essential for accurate translation. The polypeptide is Large ribosomal subunit protein bL12 (Dictyoglomus thermophilum (strain ATCC 35947 / DSM 3960 / H-6-12)).